Reading from the N-terminus, the 137-residue chain is Chaperone protein YscB (137 aa).

As to quaternary structure, interacts with SycN to form a complex which specifically binds to YopN.

It localises to the cytoplasm. It is found in the cell inner membrane. Functionally, functions as a specific chaperone for YopN. It could facilitate the secretion and the subsequent translocation of YopN. The polypeptide is Chaperone protein YscB (yscB) (Yersinia pestis).